A 343-amino-acid polypeptide reads, in one-letter code: Protein RecA (343 aa).

An ATP-binding site is contributed by 66-73 (GPESSGKT).

Belongs to the RecA family.

The protein localises to the cytoplasm. Its function is as follows. Can catalyze the hydrolysis of ATP in the presence of single-stranded DNA, the ATP-dependent uptake of single-stranded DNA by duplex DNA, and the ATP-dependent hybridization of homologous single-stranded DNAs. It interacts with LexA causing its activation and leading to its autocatalytic cleavage. The chain is Protein RecA from Nitrosomonas eutropha (strain DSM 101675 / C91 / Nm57).